The following is a 190-amino-acid chain: Protein PLANT CADMIUM RESISTANCE 8 (190 aa).

A disordered region spans residues 1–31; it reads MGRVTTPSEEDSNNGLPVQQPGTPNQRTRVP. Residues 13 to 28 are compositionally biased toward polar residues; that stretch reads NNGLPVQQPGTPNQRT. T23 carries the post-translational modification Phosphothreonine. Residues 94–113 form a helical membrane-spanning segment; it reads LGTFMYLLMMPALCSHWVMG.

This sequence belongs to the cornifelin family.

It is found in the cell membrane. Functionally, may be involved in heavy metals transport. This Arabidopsis thaliana (Mouse-ear cress) protein is Protein PLANT CADMIUM RESISTANCE 8 (PCR8).